Consider the following 115-residue polypeptide: uncharacterized protein (115 aa).

A compositionally biased stretch (basic residues) spans 90–100; it reads THFGRPATRRR. A disordered region spans residues 90–115; sequence THFGRPATRRRPLGEREVNPSARSLG.

This is an uncharacterized protein from Saccharomyces cerevisiae (strain ATCC 204508 / S288c) (Baker's yeast).